The chain runs to 375 residues: POU domain, class 3, transcription factor 1-A (375 aa).

Disordered stretches follow at residues 1–29 (MAAT…RMHQ), 67–138 (PASD…HQPL), and 151–200 (MLGP…PSSD). Composition is skewed to polar residues over residues 107 to 117 (VHQQSPSSHAW), 129 to 138 (SPSSNSHQPL), and 151 to 160 (MLGPQASSLH). The segment covering 162 to 177 (SMRDPLHDDPGVHDTQ) has biased composition (basic and acidic residues). Residues 194 to 268 (EDAPSSDDLE…LLNKWLEETD (75 aa)) form the POU-specific domain. A DNA-binding region (homeobox) is located at residues 286 to 345 (KRKKRTSIEVGVKGALENHFLKCPKPSAHEITSLADSLQLEKEVVRVWFCNRRQKEKRMT).

The protein belongs to the POU transcription factor family. Class-3 subfamily. In terms of tissue distribution, in embryos at the neural fold stage, localized primarily in the anterior neural plate, and localized mostly in the anterior region of the nerve cord of neurula stage embryos. In tailbud stages, expressed predominantly in the eye and brain, with weak expression along the length of the nerve cord. In adults, expressed in skin and brain.

The protein resides in the nucleus. Acts as a transcription factor. May play a role in neuronal differentiation. The chain is POU domain, class 3, transcription factor 1-A (pou3f1-a) from Xenopus laevis (African clawed frog).